The sequence spans 340 residues: MGSINPPQILDIRRSKFEESIPKQVEAGLLSSPKTLPALLFYSTEGIQHWNRHSHASDFYPRHEEIQILKDKATDMAASIADGSVVVDLGSASLDKVIHLLEALEAAQKKVTYYALDLSFSELTSTLQAIPTDQFVHVQFSALHGTFDDGLQWLKETPVIRDQPHCLLLFGLTIGNFSRSNAAKFLHNIASHALVESPSQSSILLTLDSCKVPTKVTRAYTAEGVVPFALESLKYGNTLFQQDGGENVFDPEDWYFLSEWNYVLGRHEASLVPRSKDIKLGRPLDKIVVGKHEKVRFGCSYKYDSEERKELFGTAGLRDVKSWSKEGCDVAFYQLKCCPN.

Belongs to the methyltransferase superfamily. Homodimer.

It catalyses the reaction 4-(3-methylbut-2-enyl)-L-tryptophan + S-adenosyl-L-methionine = 4-(3-methylbut-2-enyl)-L-abrine + S-adenosyl-L-homocysteine + H(+). It participates in alkaloid biosynthesis; ergot alkaloid biosynthesis. In terms of biological role, 4-dimethylallyltryptophan N-methyltransferase; part of the gene cluster that mediates the biosynthesis of fungal ergot alkaloid. DmaW catalyzes the first step of ergot alkaloid biosynthesis by condensing dimethylallyl diphosphate (DMAP) and tryptophan to form 4-dimethylallyl-L-tryptophan. The second step is catalyzed by the methyltransferase easF that methylates 4-dimethylallyl-L-tryptophan in the presence of S-adenosyl-L-methionine, resulting in the formation of 4-dimethylallyl-L-abrine. The catalase easC and the FAD-dependent oxidoreductase easE then transform 4-dimethylallyl-L-abrine to chanoclavine-I which is further oxidized by easD in the presence of NAD(+), resulting in the formation of chanoclavine-I aldehyde. Chanoclavine-I aldehyde is the precursor of ergoamides and ergopeptines in Clavicipitaceae, and clavine-type alcaloids such as fumiclavine in Trichocomaceae. However, the metabolites downstream of chanoclavine-I aldehyde in Arthrodermataceae have not been identified yet. The polypeptide is 4-dimethylallyltryptophan N-methyltransferase easF (Arthroderma benhamiae (strain ATCC MYA-4681 / CBS 112371) (Trichophyton mentagrophytes)).